Consider the following 141-residue polypeptide: Hemoglobin subunit alpha-D (141 aa).

Residues 1–141 (MLTADDKKLL…VAAVLAEKYR (141 aa)) form the Globin domain. Heme b is bound by residues H58 and H87.

The protein belongs to the globin family. Heterotetramer of two alpha-D chains and two beta chains. As to expression, red blood cells.

Functionally, involved in oxygen transport from the lung to the various peripheral tissues. In Chloephaga melanoptera (Andean goose), this protein is Hemoglobin subunit alpha-D (HBAD).